Reading from the N-terminus, the 256-residue chain is DNA repair protein RecO (256 aa).

This sequence belongs to the RecO family.

In terms of biological role, involved in DNA repair and RecF pathway recombination. This is DNA repair protein RecO from Streptococcus pneumoniae serotype 2 (strain D39 / NCTC 7466).